A 180-amino-acid chain; its full sequence is Large ribosomal subunit protein uL5 (180 aa).

It belongs to the universal ribosomal protein uL5 family. Part of the 50S ribosomal subunit; part of the 5S rRNA/L5/L18/L25 subcomplex. Contacts the 5S rRNA and the P site tRNA. Forms a bridge to the 30S subunit in the 70S ribosome.

Functionally, this is one of the proteins that bind and probably mediate the attachment of the 5S RNA into the large ribosomal subunit, where it forms part of the central protuberance. In the 70S ribosome it contacts protein S13 of the 30S subunit (bridge B1b), connecting the 2 subunits; this bridge is implicated in subunit movement. Contacts the P site tRNA; the 5S rRNA and some of its associated proteins might help stabilize positioning of ribosome-bound tRNAs. The polypeptide is Large ribosomal subunit protein uL5 (Chlamydia caviae (strain ATCC VR-813 / DSM 19441 / 03DC25 / GPIC) (Chlamydophila caviae)).